Reading from the N-terminus, the 259-residue chain is Caffeoyl-CoA O-methyltransferase 1 (259 aa).

Residues 1–14 (MATTTTEATKTSST) show a composition bias toward low complexity. Residues 1 to 29 (MATTTTEATKTSSTNGEDQKQSQNLRHQE) are disordered. Alanine 2 bears the N-acetylalanine mark. Residue lysine 33 coordinates substrate. Residues threonine 75, glutamate 97, 99–100 (GV), serine 105, aspartate 123, and alanine 152 contribute to the S-adenosyl-L-methionine site. Substrate is bound at residue aspartate 175. A divalent metal cation is bound at residue aspartate 175. Residue aspartate 177 participates in S-adenosyl-L-methionine binding. 2 residues coordinate a divalent metal cation: aspartate 201 and asparagine 202. Asparagine 206 lines the substrate pocket.

It belongs to the class I-like SAM-binding methyltransferase superfamily. Cation-dependent O-methyltransferase family. CCoAMT subfamily. It depends on a divalent metal cation as a cofactor. Expressed in stems and roots. Detected in leaves, siliques, flower buds, flowers. Expressed in the tapetum, but not in the endothecium. Detected in the vascular system of leaves and all flower organs, including stigma, stamens, petals and sepals.

It catalyses the reaction (E)-caffeoyl-CoA + S-adenosyl-L-methionine = (E)-feruloyl-CoA + S-adenosyl-L-homocysteine + H(+). Its pathway is aromatic compound metabolism; phenylpropanoid biosynthesis. Methylates caffeoyl-CoA to feruloyl-CoA. Has a very low activity with caffeic acid and esculetin. Involved in scopoletin biosynthesis in roots. In Arabidopsis thaliana (Mouse-ear cress), this protein is Caffeoyl-CoA O-methyltransferase 1 (CCOAOMT1).